Reading from the N-terminus, the 392-residue chain is Cobalt-precorrin-5B C(1)-methyltransferase (392 aa).

This sequence belongs to the CbiD family.

The catalysed reaction is Co-precorrin-5B + S-adenosyl-L-methionine = Co-precorrin-6A + S-adenosyl-L-homocysteine. The protein operates within cofactor biosynthesis; adenosylcobalamin biosynthesis; cob(II)yrinate a,c-diamide from sirohydrochlorin (anaerobic route): step 6/10. Its function is as follows. Catalyzes the methylation of C-1 in cobalt-precorrin-5B to form cobalt-precorrin-6A. The chain is Cobalt-precorrin-5B C(1)-methyltransferase from Pelobacter propionicus (strain DSM 2379 / NBRC 103807 / OttBd1).